We begin with the raw amino-acid sequence, 334 residues long: MIKLAIDGMGGDNAPKEIVEGSILALKQFDDIELTIFGDVDKMKPYLIEHPRLKVVHTPKYFEMGVKDIGRHTLRDDKDTSMLMAINHVKEGLADGVVSSGPTQALIFASFFMIRPMKEMKRVAIAPMVPTVIGKPTILLDAGGNIDAKAEHLLDFAIFSTIALKEVYGVKSPKVGLINIGTEPGKGRDIDKETFELLSKHPLIDFYGNLEPKEILTSDAQILLSDGFTANIVMKTMEGTASALGKILKREIKASFWGKLAAVLFLKKPLKRFKQSMSADEVGGALIAGLDKVVVKAHGSSEAYAFMNAIRQAKTMVSHDVIGKVKNVLRGQDE.

Belongs to the PlsX family. In terms of assembly, homodimer. Probably interacts with PlsY.

It is found in the cytoplasm. It catalyses the reaction a fatty acyl-[ACP] + phosphate = an acyl phosphate + holo-[ACP]. It functions in the pathway lipid metabolism; phospholipid metabolism. Its function is as follows. Catalyzes the reversible formation of acyl-phosphate (acyl-PO(4)) from acyl-[acyl-carrier-protein] (acyl-ACP). This enzyme utilizes acyl-ACP as fatty acyl donor, but not acyl-CoA. The protein is Phosphate acyltransferase of Acholeplasma laidlawii (strain PG-8A).